Consider the following 104-residue polypeptide: Cytochrome c-551 (104 aa).

Positions 1–22 (MKKILIPMLALGGALAMQPALA) are cleaved as a signal peptide. Residues C34, C37, H38, and M83 each contribute to the heme c site.

Binds 1 heme c group covalently per subunit.

The protein resides in the periplasm. In terms of biological role, electron donor for cytochrome cd1 in nitrite and nitrate respiration. This chain is Cytochrome c-551 (nirM), found in Stutzerimonas stutzeri (Pseudomonas stutzeri).